Consider the following 150-residue polypeptide: Putative transmembrane protein DDB_G0277665 (150 aa).

2 helical membrane-spanning segments follow: residues 4 to 24 (TLII…FNIL) and 42 to 62 (VIVG…FLPL).

The protein localises to the membrane. The sequence is that of Putative transmembrane protein DDB_G0277665 from Dictyostelium discoideum (Social amoeba).